We begin with the raw amino-acid sequence, 199 residues long: MTKVKICGLSTKEAVETAVSAGADYIGFVFAPSKRQVTLEEAAELAKLIPADVKKVGVFVSPSRVELLEAIDKVGLDLVQVHGQVADDLFENLPCASIQAVQVDGNGHVPNSQADYLLFDAPVAGSGQPFDWGQLDTTGLAQPFFIAGGLNEDNVVKAIQHFTPYAVDVSSGVETDGQKDHEKIRRFIERVKNGISRTK.

The protein belongs to the TrpF family.

It carries out the reaction N-(5-phospho-beta-D-ribosyl)anthranilate = 1-(2-carboxyphenylamino)-1-deoxy-D-ribulose 5-phosphate. Its pathway is amino-acid biosynthesis; L-tryptophan biosynthesis; L-tryptophan from chorismate: step 3/5. The sequence is that of N-(5'-phosphoribosyl)anthranilate isomerase from Streptococcus pneumoniae (strain ATCC BAA-255 / R6).